The following is a 65-amino-acid chain: Hirudin-3 (65 aa).

Positions Val1–Tyr3 are interaction with thrombin active site. 3 disulfide bridges follow: Cys6-Cys14, Cys16-Cys28, and Cys22-Cys39. Residues Cys39–Gln65 are disordered. An O-linked (GalNAc...) threonine glycan is attached at Thr45. The segment at Asp55–Gln65 is interaction with fibrinogen-binding exosite of thrombin. Over residues Asp55 to Gln65 the composition is skewed to acidic residues. Tyr63 carries the post-translational modification Sulfotyrosine.

Belongs to the protease inhibitor I14 (hirudin) family.

It is found in the secreted. Functionally, hirudin is a potent thrombin-specific protease inhibitor. It forms a stable non-covalent complex with alpha-thrombin, thereby abolishing its ability to cleave fibrinogen. In Hirudo medicinalis (Medicinal leech), this protein is Hirudin-3.